A 131-amino-acid polypeptide reads, in one-letter code: Glycine cleavage system H protein (131 aa).

One can recognise a Lipoyl-binding domain in the interval Thr-24–Glu-106. An N6-lipoyllysine modification is found at Lys-65.

The protein belongs to the GcvH family. In terms of assembly, the glycine cleavage system is composed of four proteins: P, T, L and H. It depends on (R)-lipoate as a cofactor.

Functionally, the glycine cleavage system catalyzes the degradation of glycine. The H protein shuttles the methylamine group of glycine from the P protein to the T protein. The sequence is that of Glycine cleavage system H protein from Mycobacteroides abscessus (strain ATCC 19977 / DSM 44196 / CCUG 20993 / CIP 104536 / JCM 13569 / NCTC 13031 / TMC 1543 / L948) (Mycobacterium abscessus).